A 312-amino-acid polypeptide reads, in one-letter code: Olfactory receptor 1D5 (312 aa).

Over 1–25 (MDGDNQSENSQFLLLGISESPEQQR) the chain is Extracellular. Residue N5 is glycosylated (N-linked (GlcNAc...) asparagine). The chain crosses the membrane as a helical span at residues 26 to 49 (ILFWMFLSMYLVTVLGNVLIILAI). The Cytoplasmic portion of the chain corresponds to 50-57 (SSDSHLHT). The helical transmembrane segment at 58–79 (PMYFFLANLSFTDLFFVTNTIP) threads the bilayer. The Extracellular segment spans residues 80-100 (KMLVNFQSQNKAISYAGCLTQ). A disulfide bond links C97 and C189. Residues 101–120 (LYFLVSLVTLDNLILAVMAY) form a helical membrane-spanning segment. Over 121 to 140 (DRYVATCCPLHYVTAMSPGL) the chain is Cytoplasmic. The chain crosses the membrane as a helical span at residues 141-158 (CVLLLSLCWGLSVLYGLL). The Extracellular portion of the chain corresponds to 159 to 196 (LTFLLTRVTFCGPREIHYLFCDMYILLWLACSNTHIIH). A helical membrane pass occupies residues 197–220 (TALIATGCFIFLTPLGFMTTSYVR). The Cytoplasmic segment spans residues 221–237 (IVRTILQMPSASKKYKT). Residues 238–260 (FSTCASHLGVVSLFYGTLAMVYL) form a helical membrane-spanning segment. Residues 261-271 (QPLHTYSMKDS) lie on the Extracellular side of the membrane. A helical transmembrane segment spans residues 272–291 (VATVMYAVLTPMMNPFIYRL). The Cytoplasmic portion of the chain corresponds to 292 to 312 (RNKDMHGAPGRVLWRPFQRPK).

Belongs to the G-protein coupled receptor 1 family.

It localises to the cell membrane. Functionally, odorant receptor. In Homo sapiens (Human), this protein is Olfactory receptor 1D5 (OR1D5).